The chain runs to 211 residues: Large ribosomal subunit protein uL3 (211 aa).

The protein belongs to the universal ribosomal protein uL3 family. As to quaternary structure, part of the 50S ribosomal subunit. Forms a cluster with proteins L14 and L19.

Its function is as follows. One of the primary rRNA binding proteins, it binds directly near the 3'-end of the 23S rRNA, where it nucleates assembly of the 50S subunit. This is Large ribosomal subunit protein uL3 from Citrifermentans bemidjiense (strain ATCC BAA-1014 / DSM 16622 / JCM 12645 / Bem) (Geobacter bemidjiensis).